We begin with the raw amino-acid sequence, 279 residues long: Oxygen-dependent coproporphyrinogen-III oxidase (279 aa).

A substrate-binding site is contributed by serine 102. A divalent metal cation-binding residues include histidine 106 and histidine 116. Histidine 116 serves as the catalytic Proton donor. Residue 118-120 (NTR) coordinates substrate. A divalent metal cation contacts are provided by histidine 149 and histidine 179. The interval 244–279 (YVEFNLLYDRGTKFGLMTDGNIEAILMSLPPVVKFN) is important for dimerization.

It belongs to the aerobic coproporphyrinogen-III oxidase family. As to quaternary structure, homodimer. The cofactor is a divalent metal cation.

It is found in the cytoplasm. The catalysed reaction is coproporphyrinogen III + O2 + 2 H(+) = protoporphyrinogen IX + 2 CO2 + 2 H2O. It functions in the pathway porphyrin-containing compound metabolism; protoporphyrin-IX biosynthesis; protoporphyrinogen-IX from coproporphyrinogen-III (O2 route): step 1/1. Its function is as follows. Involved in the heme biosynthesis. Catalyzes the aerobic oxidative decarboxylation of propionate groups of rings A and B of coproporphyrinogen-III to yield the vinyl groups in protoporphyrinogen-IX. This Rickettsia typhi (strain ATCC VR-144 / Wilmington) protein is Oxygen-dependent coproporphyrinogen-III oxidase.